A 67-amino-acid chain; its full sequence is ATP synthase F(0) complex subunit 8 (67 aa).

A helical transmembrane segment spans residues 8 to 24; the sequence is TWSITIMSMIMTLFIVF. N6-acetyllysine; alternate is present on lysine 54. Lysine 54 is subject to N6-succinyllysine; alternate. The residue at position 57 (lysine 57) is an N6-acetyllysine.

The protein belongs to the ATPase protein 8 family. As to quaternary structure, component of the ATP synthase complex composed at least of ATP5F1A/subunit alpha, ATP5F1B/subunit beta, ATP5MC1/subunit c (homooctomer), MT-ATP6/subunit a, MT-ATP8/subunit 8, ATP5ME/subunit e, ATP5MF/subunit f, ATP5MG/subunit g, ATP5MK/subunit k, ATP5MJ/subunit j, ATP5F1C/subunit gamma, ATP5F1D/subunit delta, ATP5F1E/subunit epsilon, ATP5PF/subunit F6, ATP5PB/subunit b, ATP5PD/subunit d, ATP5PO/subunit OSCP. ATP synthase complex consists of a soluble F(1) head domain (subunits alpha(3) and beta(3)) - the catalytic core - and a membrane F(0) domain - the membrane proton channel (subunits c, a, 8, e, f, g, k and j). These two domains are linked by a central stalk (subunits gamma, delta, and epsilon) rotating inside the F1 region and a stationary peripheral stalk (subunits F6, b, d, and OSCP). Interacts with PRICKLE3.

The protein localises to the mitochondrion membrane. Functionally, subunit 8, of the mitochondrial membrane ATP synthase complex (F(1)F(0) ATP synthase or Complex V) that produces ATP from ADP in the presence of a proton gradient across the membrane which is generated by electron transport complexes of the respiratory chain. ATP synthase complex consist of a soluble F(1) head domain - the catalytic core - and a membrane F(1) domain - the membrane proton channel. These two domains are linked by a central stalk rotating inside the F(1) region and a stationary peripheral stalk. During catalysis, ATP synthesis in the catalytic domain of F(1) is coupled via a rotary mechanism of the central stalk subunits to proton translocation. In vivo, can only synthesize ATP although its ATP hydrolase activity can be activated artificially in vitro. Part of the complex F(0) domain. In Felis catus (Cat), this protein is ATP synthase F(0) complex subunit 8.